A 383-amino-acid chain; its full sequence is Cytochrome b (383 aa).

The next 4 membrane-spanning stretches (helical) occupy residues 32–52 (FGSL…FLAM), 76–98 (WLIR…CHIA), 113–133 (TWSI…LGYV), and 179–199 (FFSL…AHMI). Residues H82 and H96 each coordinate heme b. Residues H183 and H197 each contribute to the heme b site. A ubiquinone is bound at residue H202. 4 helical membrane-spanning segments follow: residues 225 to 245 (FIFK…IFVC), 289 to 309 (LLGV…PLTD), 321 to 341 (LMKL…WIGA), and 348 to 368 (YLEV…FIVP).

Belongs to the cytochrome b family. As to quaternary structure, fungal cytochrome b-c1 complex contains 10 subunits; 3 respiratory subunits, 2 core proteins and 5 low-molecular weight proteins. Cytochrome b-c1 complex is a homodimer. The cofactor is heme b.

It localises to the mitochondrion inner membrane. Functionally, component of the ubiquinol-cytochrome c reductase complex (complex III or cytochrome b-c1 complex) that is part of the mitochondrial respiratory chain. The b-c1 complex mediates electron transfer from ubiquinol to cytochrome c. Contributes to the generation of a proton gradient across the mitochondrial membrane that is then used for ATP synthesis. This chain is Cytochrome b (cob), found in Schizophyllum commune (Split gill fungus).